The following is a 189-amino-acid chain: Protein C1orf43 homolog (189 aa).

Residues 11–31 (VNVVLVMAYGSLVFVLLFIFV) form a helical membrane-spanning segment.

Its subcellular location is the membrane. The protein resides in the golgi apparatus. It localises to the mitochondrion. General regulator of phagocytosis. Required to uptake Gram negative bacterium by macrophages. This Pongo abelii (Sumatran orangutan) protein is Protein C1orf43 homolog.